Here is a 179-residue protein sequence, read N- to C-terminus: Protein Syd (179 aa).

This sequence belongs to the Syd family.

Its subcellular location is the cell inner membrane. In terms of biological role, interacts with the SecY protein in vivo. May bind preferentially to an uncomplexed state of SecY, thus functioning either as a chelating agent for excess SecY in the cell or as a regulatory factor that negatively controls the translocase function. In Pseudoalteromonas translucida (strain TAC 125), this protein is Protein Syd.